The primary structure comprises 358 residues: Core-capsid bridging protein (358 aa).

The interval 296–331 (PSITPTPGYRGTTFKPSRTRSTRRRRSVRRRSRRTA) is disordered. The segment covering 312 to 329 (SRTRSTRRRRSVRRRSRR) has biased composition (basic residues).

The protein belongs to the adenoviridae core-capsid bridging protein family. Monomer. Homodimer. Exists in equilibrium between monomers and dimers in solution. Interacts with the histone-like nucleoprotein; this interactions bridge the virus core to the capsid. Interacts with core protein X; this interactions bridge the virus core to the capsid. Interacts with the endosome lysis protein VI; this interactions bridge the virus core to the capsid. Interacts with the peripentonal hexons. Interacts with host NPM1; this interaction might play a role in virus assembly.

The protein resides in the virion. It localises to the host nucleus. It is found in the host nucleolus. Its function is as follows. Associates loosely with the viral DNA to form an outer shell around the nucleoprotein-DNA complex and links it with the capsid by binding the endosome lysis protein. Dissociates from the viral genome during entry. Might be involved in nuclear capsid assembly of the viral particles through its association with NPM1/nucleophosmin. This Human adenovirus F serotype 40 (HAdV-40) protein is Core-capsid bridging protein.